A 436-amino-acid chain; its full sequence is Ribulose bisphosphate carboxylase large chain (436 aa).

The substrate site is built by asparagine 104 and threonine 154. Lysine 156 functions as the Proton acceptor in the catalytic mechanism. Lysine 158 is a binding site for substrate. Lysine 182, aspartate 184, and glutamate 185 together coordinate Mg(2+). Lysine 182 carries the post-translational modification N6-carboxylysine. The Proton acceptor role is filled by histidine 275. 3 residues coordinate substrate: arginine 276, histidine 308, and serine 360.

The protein belongs to the RuBisCO large chain family. Type I subfamily. As to quaternary structure, heterohexadecamer of 8 large chains and 8 small chains; disulfide-linked. The disulfide link is formed within the large subunit homodimers. Mg(2+) is required as a cofactor. Post-translationally, the disulfide bond which can form in the large chain dimeric partners within the hexadecamer appears to be associated with oxidative stress and protein turnover.

The protein localises to the plastid. The protein resides in the chloroplast. It catalyses the reaction 2 (2R)-3-phosphoglycerate + 2 H(+) = D-ribulose 1,5-bisphosphate + CO2 + H2O. The catalysed reaction is D-ribulose 1,5-bisphosphate + O2 = 2-phosphoglycolate + (2R)-3-phosphoglycerate + 2 H(+). In terms of biological role, ruBisCO catalyzes two reactions: the carboxylation of D-ribulose 1,5-bisphosphate, the primary event in carbon dioxide fixation, as well as the oxidative fragmentation of the pentose substrate in the photorespiration process. Both reactions occur simultaneously and in competition at the same active site. The sequence is that of Ribulose bisphosphate carboxylase large chain from Euglena geniculata.